We begin with the raw amino-acid sequence, 37 residues long: Trypsin inhibitor 3 (37 aa).

Intrachain disulfides connect Cys-4–Cys-21, Cys-11–Cys-25, and Cys-20–Cys-36.

In terms of biological role, trypsin inhibitor. The chain is Trypsin inhibitor 3 from Spinacia oleracea (Spinach).